Consider the following 565-residue polypeptide: SRSF protein kinase 3 (565 aa).

Residues 1-44 (MSANAGGSGSVDCGGSSSSSQTSCGPESSGSELTPATPAPRLLQ) form a disordered region. Positions 10–31 (SVDCGGSSSSSQTSCGPESSGS) are enriched in low complexity. Serine 49 bears the Phosphoserine mark. A Protein kinase domain is found at 78 to 563 (YHVVRKLGWG…AADCLQHPWL (486 aa)). ATP contacts are provided by residues 84-92 (LGWGHFSTV) and lysine 107. The active-site Proton acceptor is the aspartate 211. A compositionally biased stretch (polar residues) spans 236–253 (WQQSGAQPPSRSTVSTAP). Disordered regions lie at residues 236–280 (WQQS…KRLL) and 295–350 (AAVQ…QTSG). Residues 262 to 277 (SKNKRKKMRRKRKQQK) are compositionally biased toward basic residues. A compositionally biased stretch (low complexity) spans 325–350 (AGPSPASSSPVPGGERSLSPSSQTSG). A Phosphoserine modification is found at serine 328.

The protein belongs to the protein kinase superfamily. CMGC Ser/Thr protein kinase family. As to expression, exclusively expressed in skeletal and heart muscle.

The protein resides in the nucleus. It is found in the cytoplasm. The catalysed reaction is L-seryl-[protein] + ATP = O-phospho-L-seryl-[protein] + ADP + H(+). It catalyses the reaction L-threonyl-[protein] + ATP = O-phospho-L-threonyl-[protein] + ADP + H(+). In terms of biological role, serine/arginine-rich protein-specific kinase which specifically phosphorylates its substrates at serine residues located in regions rich in arginine/serine dipeptides, known as RS domains. Phosphorylates the SR splicing factor SRSF1 and the lamin-B receptor (LBR) in vitro. Required for normal muscle development. The protein is SRSF protein kinase 3 (Srpk3) of Mus musculus (Mouse).